A 229-amino-acid polypeptide reads, in one-letter code: RNA pyrophosphohydrolase (229 aa).

The region spanning 6 to 149 (GFRPNVGIIL…KRGVYEMALT (144 aa)) is the Nudix hydrolase domain. The Nudix box motif lies at 38–59 (GGIDRGETPEQAMFRELHEEVG). The disordered stretch occupies residues 191–229 (KPGMELPPGASFDPDPQNSVPAPLEALPTLPVPKKPLDA). Positions 220–229 (LPVPKKPLDA) are enriched in pro residues.

Belongs to the Nudix hydrolase family. RppH subfamily. Requires a divalent metal cation as cofactor.

Its function is as follows. Accelerates the degradation of transcripts by removing pyrophosphate from the 5'-end of triphosphorylated RNA, leading to a more labile monophosphorylated state that can stimulate subsequent ribonuclease cleavage. In Acidovorax ebreus (strain TPSY) (Diaphorobacter sp. (strain TPSY)), this protein is RNA pyrophosphohydrolase.